Here is a 587-residue protein sequence, read N- to C-terminus: Aspartate--tRNA ligase (587 aa).

Glu-173 lines the L-aspartate pocket. The segment at 197-200 (QTLK) is aspartate. Position 219 (Arg-219) interacts with L-aspartate. ATP contacts are provided by residues 219-221 (RDE) and Gln-228. His-446 contacts L-aspartate. Residue Glu-480 coordinates ATP. Residue Arg-487 coordinates L-aspartate. 532-535 (GLDR) contacts ATP.

The protein belongs to the class-II aminoacyl-tRNA synthetase family. Type 1 subfamily. Homodimer.

It localises to the cytoplasm. It catalyses the reaction tRNA(Asp) + L-aspartate + ATP = L-aspartyl-tRNA(Asp) + AMP + diphosphate. Catalyzes the attachment of L-aspartate to tRNA(Asp) in a two-step reaction: L-aspartate is first activated by ATP to form Asp-AMP and then transferred to the acceptor end of tRNA(Asp). In Bacteroides thetaiotaomicron (strain ATCC 29148 / DSM 2079 / JCM 5827 / CCUG 10774 / NCTC 10582 / VPI-5482 / E50), this protein is Aspartate--tRNA ligase.